Reading from the N-terminus, the 137-residue chain is Ubiquitin-conjugating enzyme variant MMS2 (137 aa).

The UBC core domain maps to 5-137 (PRNFRLLEEL…LRQPKEGETF (133 aa)). S71 bears the Phosphoserine mark.

Belongs to the ubiquitin-conjugating enzyme family. As to quaternary structure, heterodimer with UBC13.

Its function is as follows. Has a role in the DNA error-free postreplication repair (PRR) pathway. Lacks catalytic activity by itself. The UBC13/MMS2 heterodimer catalyzes the synthesis of non-canonical poly-ubiquitin chains that are linked through 'Lys-63'. This is Ubiquitin-conjugating enzyme variant MMS2 (MMS2) from Saccharomyces cerevisiae (strain ATCC 204508 / S288c) (Baker's yeast).